The primary structure comprises 123 residues: KxDL motif-containing protein LO9-177 (123 aa).

The KxDL signature appears at 78-81; sequence KDDL.

It belongs to the KXD1 family. In terms of assembly, homodimer. Component of a nuclear cell elongation controlling complex made of ILI5/BUL1, LO9-177 and BC1. Binds directly to ILI5/BUL1, ILI4/BU1, BUL2 and BUL3. Binds to BC1 in the nucleus. Interacts with BCL1.

Its subcellular location is the nucleus. The protein localises to the cytoplasm. Its function is as follows. Contributes, together with ILI5/BUL1 and BC1, to the promotion of leaf inclination and grain size by modulating cell elongation. The chain is KxDL motif-containing protein LO9-177 from Oryza sativa subsp. indica (Rice).